An 84-amino-acid chain; its full sequence is Cell division topological specificity factor (84 aa).

The protein belongs to the MinE family.

Prevents the cell division inhibition by proteins MinC and MinD at internal division sites while permitting inhibition at polar sites. This ensures cell division at the proper site by restricting the formation of a division septum at the midpoint of the long axis of the cell. The protein is Cell division topological specificity factor of Pseudomonas entomophila (strain L48).